The sequence spans 87 residues: Small ribosomal subunit protein uS12m (87 aa).

Belongs to the universal ribosomal protein uS12 family.

The protein resides in the mitochondrion matrix. It is found in the kinetoplast. In terms of biological role, protein S12 is involved in the translation initiation step. The polypeptide is Small ribosomal subunit protein uS12m (RPS12) (Trypanoplasma borreli).